The chain runs to 138 residues: Protein FAM136A (138 aa).

N-acetylalanine is present on Ala2. A phosphothreonine mark is found at Thr124 and Thr126.

Belongs to the FAM136 family.

The polypeptide is Protein FAM136A (FAM136A) (Bos taurus (Bovine)).